Here is a 368-residue protein sequence, read N- to C-terminus: snRNA-activating protein complex subunit 1 (368 aa).

The segment at 1-168 (MGTPPGLQTD…EEFKDPSDRV (168 aa)) is SNAPC3-binding. Residues 164 to 268 (PSDRVMKLIT…AESLAKIKSK (105 aa)) are SNAPC4-binding. 2 disordered regions span residues 224-257 (QQWHKDRKNPSLKSKTNDGEEKMEGNSQETERCE) and 275-368 (QASK…RRKH). A compositionally biased stretch (basic and acidic residues) spans 238-257 (KTNDGEEKMEGNSQETERCE). Phosphoserine occurs at positions 289 and 290.

Part of the SNAPc complex composed of 5 subunits: SNAPC1, SNAPC2, SNAPC3, SNAPC4 and SNAPC5. SNAPC1 interacts with SNAPC3, SNAPC4 and TBP.

It is found in the nucleus. Part of the SNAPc complex required for the transcription of both RNA polymerase II and III small-nuclear RNA genes. Binds to the proximal sequence element (PSE), a non-TATA-box basal promoter element common to these 2 types of genes. Recruits TBP and BRF2 to the U6 snRNA TATA box. The polypeptide is snRNA-activating protein complex subunit 1 (SNAPC1) (Homo sapiens (Human)).